We begin with the raw amino-acid sequence, 1337 residues long: C-Jun-amino-terminal kinase-interacting protein 3 (1337 aa).

An RH1 domain is found at 12–100; it reads VVVYQDDYCS…LTQYEREKAL (89 aa). A kinesin-binding domain (KBD); essential for its function in axon elongation region spans residues 50-80; sequence EVVKELMPLVVNVLENLDSVLSENQEHEVEL. The stretch at 58-177 forms a coiled coil; sequence LVVNVLENLD…HTEMIQTYVE (120 aa). Disordered regions lie at residues 183–211 and 245–285; these read KMQQ…SLNV and SSSY…PSAA. Positions 184 to 198 are enriched in polar residues; the sequence is MQQVGGSGQTESSLP. Residues 210–226 form a JNK-binding domain (JBD); essential for its function in axon elongation region; it reads NVFPLADGMVRAQMGGK. A compositionally biased stretch (low complexity) spans 261 to 270; the sequence is SSAAATPSTT. Thr-266, Thr-276, and Thr-287 each carry phosphothreonine; by MAPK. Over residues 271–282 the composition is skewed to polar residues; that stretch reads GTKSNTPTSSVP. 2 positions are modified to phosphoserine; by ROCK1: Ser-315 and Ser-365. At Ser-366 the chain carries Phosphoserine. Residues 424-459 are leucine zipper-like domain (LZ); essential for its function in axon elongation; sequence LLLENSQLLETKNALNVVKNDLIAKVDQLSGEQEVL. Positions 437–555 form a coiled coil; it reads ALNVVKNDLI…LQEAVRWTEM (119 aa). The tract at residues 459–515 is interaction with NTRK2; that stretch reads LKGELEAAKQAKVKLENRIKELEEELKRVKSEAVTARREPREEVEDVSSYLCTELDK. Residues 521 to 595 enclose the RH2 domain; that stretch reads RRRFTRVEMA…SPPPAKRSYP (75 aa). A Phosphoserine modification is found at Ser-603. Residues 633 to 655 form a disordered region; sequence DDCTSSARREQKREQYRQVREHV. Basic and acidic residues predominate over residues 639–655; the sequence is ARREQKREQYRQVREHV. Ser-677 bears the Phosphoserine mark. 2 disordered regions span residues 719–772 and 859–966; these read WKPH…ATSS and PRSN…TTTS. Basic and acidic residues predominate over residues 739 to 765; sequence LTCDREGEGEPKSTHPSPEKKKAKETP. Polar residues-rich tracts occupy residues 879–892 and 941–952; these read VATT…PSQS and ENGSESNGTIVQ.

This sequence belongs to the JIP scaffold family. Forms homo- or heterooligomeric complexes. The central region of MAPK8IP3 interacts with the C-terminal of MAPK8IP2 but not MAPK8IP1. Binds specific components of the JNK signaling pathway namely MAPK8/JNK1, MAPK9/JNK2 and MAPK10/JNK3 to the N-terminal region, MAP2K4/MKK4 and MAP2K7/MKK7 to the central region and MAP3K11 to the C-terminal region. Binds the TPR motif-containing C-terminal of kinesin light chain, KLC1. Pre-assembled MAPK8IP1 scaffolding complexes are then transported as a cargo of kinesin, to the required subcellular location. Interacts with ROCK1 and this interaction is enhanced by ultraviolet-B (UVB) radiation. Interacts with SH3RF2. Interacts with NTRK2/TRKB and NTRK3/TRKC. Phosphorylation by ROCK1 is crucial for the recruitment of JNK. In terms of tissue distribution, highly expressed throughout many regions of the brain and at lower levels in the heart, liver, lung, testes and kidney. All isoforms have been identified in the brain, isoform 1a is also expressed in the spleen and lung.

The protein resides in the cytoplasm. The protein localises to the golgi apparatus. It is found in the cytoplasmic vesicle. Its subcellular location is the cell projection. It localises to the growth cone. The protein resides in the axon. The protein localises to the dendrite. It is found in the perinuclear region. The JNK-interacting protein (JIP) group of scaffold proteins selectively mediates JNK signaling by aggregating specific components of the MAPK cascade to form a functional JNK signaling module. May function as a regulator of vesicle transport, through interactions with the JNK-signaling components and motor proteins. Promotes neuronal axon elongation in a kinesin- and JNK-dependent manner. Activates cofilin at axon tips via local activation of JNK, thereby regulating filopodial dynamics and enhancing axon elongation. Its binding to kinesin heavy chains (KHC), promotes kinesin-1 motility along microtubules and is essential for axon elongation and regeneration. Regulates cortical neuronal migration by mediating NTRK2/TRKB anterograde axonal transport during brain development. Acts as an adapter that bridges the interaction between NTRK2/TRKB and KLC1 and drives NTRK2/TRKB axonal but not dendritic anterograde transport, which is essential for subsequent BDNF-triggered signaling and filopodia formation. In Mus musculus (Mouse), this protein is C-Jun-amino-terminal kinase-interacting protein 3 (Mapk8ip3).